Consider the following 341-residue polypeptide: Methionine import ATP-binding protein MetN (341 aa).

The region spanning 9–247 is the ABC transporter domain; sequence ISVQKVNKEI…PRSSITEELF (239 aa). 41-48 contacts ATP; sequence GHSGSGKS.

This sequence belongs to the ABC transporter superfamily. Methionine importer (TC 3.A.1.24) family. The complex is composed of two ATP-binding proteins (MetN), two transmembrane proteins (MetI) and a solute-binding protein (MetQ).

It is found in the cell inner membrane. It catalyses the reaction L-methionine(out) + ATP + H2O = L-methionine(in) + ADP + phosphate + H(+). It carries out the reaction D-methionine(out) + ATP + H2O = D-methionine(in) + ADP + phosphate + H(+). Its function is as follows. Part of the ABC transporter complex MetNIQ involved in methionine import. Responsible for energy coupling to the transport system. The protein is Methionine import ATP-binding protein MetN of Chlamydia caviae (strain ATCC VR-813 / DSM 19441 / 03DC25 / GPIC) (Chlamydophila caviae).